Reading from the N-terminus, the 1039-residue chain is uncharacterized protein (1039 aa).

A signal peptide spans 1 to 28 (MKLFPRTLLKILVVSFILNFGVTSKSYA). Helical transmembrane passes span 326-346 (IVTA…LLAG), 354-374 (YINF…LNIT), 387-407 (MIQW…SWVM), 491-511 (MLVS…AFMV), 517-537 (CMVS…MFLF), and 551-571 (MISF…MFSV). A disordered region spans residues 654-680 (KPNQTCDPKAADADTKCNPKPGDSSTS). Residues 710–730 (IKDILLALVTACFTLYLMYNF) form a helical membrane-spanning segment. Disordered regions lie at residues 799 to 875 (LVKG…PTTV), 917 to 949 (IKEA…LDEN), and 1004 to 1039 (LYRS…DENP). The segment covering 802–811 (GSGGGGGSEG) has biased composition (gly residues). Residues 812 to 836 (GDSFTSGGLRETSSTAATPSSALSS) show a composition bias toward low complexity. Polar residues predominate over residues 843–861 (GTATPSSASEEMLDTSFSN). Composition is skewed to basic and acidic residues over residues 917-939 (IKEA…HTTE) and 1004-1033 (LYRS…KIDS).

The protein belongs to the TrbL/VirB6 family.

Its subcellular location is the cell membrane. This is an uncharacterized protein from Rickettsia bellii (strain RML369-C).